The primary structure comprises 469 residues: Glutamate--tRNA ligase (469 aa).

A 'HIGH' region motif is present at residues 8 to 18 (PSPTGFLHVGG). Zn(2+) is bound by residues Cys97, Cys99, Cys124, and Asp126. Residues 236–240 (KLSKR) carry the 'KMSKS' region motif. An ATP-binding site is contributed by Lys239.

The protein belongs to the class-I aminoacyl-tRNA synthetase family. Glutamate--tRNA ligase type 1 subfamily. In terms of assembly, monomer. Zn(2+) is required as a cofactor.

The protein localises to the cytoplasm. It catalyses the reaction tRNA(Glu) + L-glutamate + ATP = L-glutamyl-tRNA(Glu) + AMP + diphosphate. Functionally, catalyzes the attachment of glutamate to tRNA(Glu) in a two-step reaction: glutamate is first activated by ATP to form Glu-AMP and then transferred to the acceptor end of tRNA(Glu). The protein is Glutamate--tRNA ligase of Francisella philomiragia subsp. philomiragia (strain ATCC 25017 / CCUG 19701 / FSC 153 / O#319-036).